Here is an 89-residue protein sequence, read N- to C-terminus: Small ribosomal subunit protein uS17 (89 aa).

This sequence belongs to the universal ribosomal protein uS17 family. As to quaternary structure, part of the 30S ribosomal subunit.

In terms of biological role, one of the primary rRNA binding proteins, it binds specifically to the 5'-end of 16S ribosomal RNA. In Stenotrophomonas maltophilia (strain K279a), this protein is Small ribosomal subunit protein uS17.